The following is a 284-amino-acid chain: NH(3)-dependent NAD(+) synthetase (284 aa).

41-48 (GLSGGVDS) contacts ATP. Residue aspartate 47 coordinates Mg(2+). Arginine 127 contacts deamido-NAD(+). Residue threonine 147 participates in ATP binding. Glutamate 152 lines the Mg(2+) pocket. Position 167 (aspartate 167) interacts with deamido-NAD(+). Residues lysine 176 and serine 199 each coordinate ATP. A disordered region spans residues 264 to 284 (FKRRPAPGLDLPEPEDPAMSG). A compositionally biased stretch (acidic residues) spans 275 to 284 (PEPEDPAMSG).

Belongs to the NAD synthetase family. In terms of assembly, homodimer.

It catalyses the reaction deamido-NAD(+) + NH4(+) + ATP = AMP + diphosphate + NAD(+) + H(+). Its pathway is cofactor biosynthesis; NAD(+) biosynthesis; NAD(+) from deamido-NAD(+) (ammonia route): step 1/1. Functionally, catalyzes the ATP-dependent amidation of deamido-NAD to form NAD. Uses ammonia as a nitrogen source. The chain is NH(3)-dependent NAD(+) synthetase from Methanopyrus kandleri (strain AV19 / DSM 6324 / JCM 9639 / NBRC 100938).